The chain runs to 141 residues: Large ribosomal subunit protein uL11 (141 aa).

Belongs to the universal ribosomal protein uL11 family. Part of the ribosomal stalk of the 50S ribosomal subunit. Interacts with L10 and the large rRNA to form the base of the stalk. L10 forms an elongated spine to which L12 dimers bind in a sequential fashion forming a multimeric L10(L12)X complex. One or more lysine residues are methylated.

Forms part of the ribosomal stalk which helps the ribosome interact with GTP-bound translation factors. This chain is Large ribosomal subunit protein uL11, found in Streptococcus agalactiae serotype III (strain NEM316).